Consider the following 118-residue polypeptide: UPF0102 protein STH1475 (118 aa).

Belongs to the UPF0102 family.

This is UPF0102 protein STH1475 from Symbiobacterium thermophilum (strain DSM 24528 / JCM 14929 / IAM 14863 / T).